The chain runs to 468 residues: Tyrosine-protein phosphatase YopH (468 aa).

Residues 127–194 (ARGHVSSHSH…TVSPYGPEAR (68 aa)) are disordered. Residues 130-140 (HVSSHSHSVLH) are compositionally biased toward low complexity. The Tyrosine-protein phosphatase domain occupies 152-461 (SHLDPRTPPL…DVLIKLAEGQ (310 aa)). Residue Cys-403 is the Phosphocysteine intermediate of the active site.

The protein belongs to the protein-tyrosine phosphatase family. Non-receptor class subfamily. In terms of assembly, monomer.

The protein localises to the secreted. The enzyme catalyses O-phospho-L-tyrosyl-[protein] + H2O = L-tyrosyl-[protein] + phosphate. Its function is as follows. Essential virulence determinant. This protein is a protein tyrosine phosphatase. The essential function of YopH in Yersinia pathogenesis is host-protein dephosphorylation. It contributes to the ability of the bacteria to resist phagocytosis by peritoneal macrophages. This Yersinia enterocolitica protein is Tyrosine-protein phosphatase YopH (yopH).